We begin with the raw amino-acid sequence, 498 residues long: Glycerol kinase (498 aa).

Thr12 contacts ADP. Thr12, Thr13, and Ser14 together coordinate ATP. Sn-glycerol 3-phosphate is bound at residue Thr12. Residue Arg16 participates in ADP binding. Sn-glycerol 3-phosphate is bound by residues Arg82, Glu83, and Tyr134. Residues Arg82, Glu83, and Tyr134 each contribute to the glycerol site. His230 is modified (phosphohistidine; by HPr). Asp244 provides a ligand contact to sn-glycerol 3-phosphate. Glycerol contacts are provided by Asp244 and Gln245. Positions 266 and 309 each coordinate ADP. ATP-binding residues include Thr266, Gly309, Gln313, and Gly410. 2 residues coordinate ADP: Gly410 and Asn414.

The protein belongs to the FGGY kinase family. Homotetramer and homodimer (in equilibrium). The phosphoenolpyruvate-dependent sugar phosphotransferase system (PTS), including enzyme I, and histidine-containing protein (HPr) are required for the phosphorylation, which leads to the activation of the enzyme.

The catalysed reaction is glycerol + ATP = sn-glycerol 3-phosphate + ADP + H(+). Its pathway is polyol metabolism; glycerol degradation via glycerol kinase pathway; sn-glycerol 3-phosphate from glycerol: step 1/1. Its activity is regulated as follows. Activated by phosphorylation and inhibited by fructose 1,6-bisphosphate (FBP). In terms of biological role, key enzyme in the regulation of glycerol uptake and metabolism. Catalyzes the phosphorylation of glycerol to yield sn-glycerol 3-phosphate. The chain is Glycerol kinase from Staphylococcus aureus (strain MSSA476).